Consider the following 283-residue polypeptide: Eukaryotic translation initiation factor 3 subunit K (283 aa).

The region spanning 52–263 is the PCI domain; it reads YDLLANLAIL…EIKATVIREE (212 aa). Positions 114 to 135 are disordered; it reads EATTTDADNAGSLSGDDDDDEV.

It belongs to the eIF-3 subunit K family. In terms of assembly, component of the eukaryotic translation initiation factor 3 (eIF-3) complex.

The protein localises to the cytoplasm. Component of the eukaryotic translation initiation factor 3 (eIF-3) complex, which is involved in protein synthesis of a specialized repertoire of mRNAs and, together with other initiation factors, stimulates binding of mRNA and methionyl-tRNAi to the 40S ribosome. The eIF-3 complex specifically targets and initiates translation of a subset of mRNAs involved in cell proliferation. In Mycosarcoma maydis (Corn smut fungus), this protein is Eukaryotic translation initiation factor 3 subunit K.